The primary structure comprises 187 residues: Elongation factor P (187 aa).

It belongs to the elongation factor P family.

Its subcellular location is the cytoplasm. The protein operates within protein biosynthesis; polypeptide chain elongation. Functionally, involved in peptide bond synthesis. Stimulates efficient translation and peptide-bond synthesis on native or reconstituted 70S ribosomes in vitro. Probably functions indirectly by altering the affinity of the ribosome for aminoacyl-tRNA, thus increasing their reactivity as acceptors for peptidyl transferase. The chain is Elongation factor P from Mycobacterium ulcerans (strain Agy99).